We begin with the raw amino-acid sequence, 392 residues long: Solute carrier family 35 member B1 (392 aa).

Residues 1–40 form a disordered region; that stretch reads MSLTKKIKNEKSLKQEKQTDQLKSNLRNNNNNINNKSKPK. Positions 7–20 are enriched in basic and acidic residues; it reads IKNEKSLKQEKQTD. The span at 25 to 35 shows a compositional bias: low complexity; it reads NLRNNNNNINN. Transmembrane regions (helical) follow at residues 57–77, 97–117, 124–144, 155–175, 179–199, 215–235, 247–267, 285–305, and 341–361; these read ELFFIFCVGGIYIFYLLYGLV, AFLLALQCFFNMVSAWLVSLV, NTPFMKYGFVSMLLVISTFLS, TQVLAKSCKPIPVIFMGLLLF, YPFLKYIVVIVISLGISLFML, HLFGNFILFVSLMMDGVMGPF, ATSMMLNTNIWNLGLFSIMAF, VIKLILAFCITSAIGQQFIFL, and LQWAAICMVFGGLILDLYISY. The Di-lysine motif motif lies at 389–392; sequence KKSL.

The protein belongs to the nucleotide-sugar transporter family. SLC35B subfamily.

The protein localises to the endoplasmic reticulum membrane. Functionally, probable sugar transporter. The sequence is that of Solute carrier family 35 member B1 (slc35b1) from Dictyostelium discoideum (Social amoeba).